A 287-amino-acid polypeptide reads, in one-letter code: 4,4'-diapophytoene synthase (287 aa).

(2E,6E)-farnesyl diphosphate-binding positions include 18–21 (HSKS), Tyr-41, and Arg-45. The Mg(2+) site is built by Asp-48 and Asp-52. Position 165 (Gln-165) interacts with (2E,6E)-farnesyl diphosphate. Asn-168 is a binding site for Mg(2+). Residue Arg-171 participates in (2E,6E)-farnesyl diphosphate binding. Position 172 (Asp-172) interacts with Mg(2+). Tyr-248 is a binding site for (2E,6E)-farnesyl diphosphate.

It belongs to the phytoene/squalene synthase family. CrtM subfamily. The cofactor is Mg(2+).

The enzyme catalyses 2 (2E,6E)-farnesyl diphosphate = 15-cis-4,4'-diapophytoene + 2 diphosphate. It participates in carotenoid biosynthesis; staphyloxanthin biosynthesis; staphyloxanthin from farnesyl diphosphate: step 1/5. Involved in the biosynthesis of the yellow-orange carotenoid staphyloxanthin, which plays a role in the virulence via its protective function against oxidative stress. Catalyzes the head-to-head condensation of two molecules of farnesyl diphosphate (FPP) into the colorless C(30) carotenoid 4,4'-diapophytoene (dehydrosqualene). The chain is 4,4'-diapophytoene synthase from Staphylococcus aureus (strain NCTC 8325 / PS 47).